A 1604-amino-acid polypeptide reads, in one-letter code: Transposon Ty1-DR4 Gag-Pol polyprotein (1604 aa).

3 stretches are compositionally biased toward polar residues: residues 1-23 (MESQ…SVTS), 48-60 (TKAN…TPAS), and 127-152 (QSQF…GNTF). 3 disordered regions span residues 1 to 93 (MESQ…MMTQ), 126 to 174 (PQSQ…PPPM), and 352 to 421 (GSRN…SKST). Residues 153-165 (TDSSSADSDMTST) are compositionally biased toward low complexity. Residues 299-401 (NNGIHINNKV…NSKSKTARAH (103 aa)) form an RNA-binding region. Low complexity predominate over residues 402–418 (NVSTSNNSPSTDNDSIS). The residue at position 416 (serine 416) is a Phosphoserine. Aspartate 461 (for protease activity; shared with dimeric partner) is an active-site residue. Positions 583–640 (NVHTSESTRKYPYPFIHRMLAHANAQTIRYSLKNNTITYFNESDVDWSSAIDYQCPDC) are integrase-type zinc finger-like. Positions 660-835 (NSYEPFQYLH…AGLDISTLLP (176 aa)) constitute an Integrase catalytic domain. Residues aspartate 671 and aspartate 736 each contribute to the Mg(2+) site. Disordered stretches follow at residues 956–1087 (SKAV…ETEK), 1092–1111 (RSPS…NIVP), and 1130–1187 (DLPL…DNET). A compositionally biased stretch (low complexity) spans 960 to 969 (SPTDSTPPST). Over residues 1005 to 1015 (STPQISNIEST) the composition is skewed to polar residues. Over residues 1038-1053 (ESSHASKSKDFRHSDS) the composition is skewed to basic and acidic residues. Polar residues-rich tracts occupy residues 1054–1082 (YSEN…QISD) and 1101–1111 (PENNSSHNIVP). The Bipartite nuclear localization signal signature appears at 1178-1212 (KKRSLEDNETEIKVSRDTWNTKNMRSLEPPRSKKR). Residues 1338-1476 (NNYYITQLDI…DILGLEIKYQ (139 aa)) enclose the Reverse transcriptase Ty1/copia-type domain. Mg(2+) contacts are provided by aspartate 1346, aspartate 1427, and aspartate 1428.

In terms of assembly, the capsid protein forms a homotrimer, from which the VLPs are assembled. The protease is a homodimer, whose active site consists of two apposed aspartic acid residues. Initially, virus-like particles (VLPs) are composed of the structural unprocessed proteins Gag and Gag-Pol, and also contain the host initiator methionine tRNA (tRNA(i)-Met) which serves as a primer for minus-strand DNA synthesis, and a dimer of genomic Ty RNA. Processing of the polyproteins occurs within the particle and proceeds by an ordered pathway, called maturation. First, the protease (PR) is released by autocatalytic cleavage of the Gag-Pol polyprotein yielding capsid protein p45 and a Pol-p154 precursor protein. This cleavage is a prerequisite for subsequent processing of Pol-p154 at the remaining sites to release the mature structural and catalytic proteins. Maturation takes place prior to the RT reaction and is required to produce transposition-competent VLPs.

Its subcellular location is the cytoplasm. It localises to the nucleus. The enzyme catalyses DNA(n) + a 2'-deoxyribonucleoside 5'-triphosphate = DNA(n+1) + diphosphate. It carries out the reaction Endonucleolytic cleavage to 5'-phosphomonoester.. Its function is as follows. Capsid protein (CA) is the structural component of the virus-like particle (VLP), forming the shell that encapsulates the retrotransposons dimeric RNA genome. The particles are assembled from trimer-clustered units and there are holes in the capsid shells that allow for the diffusion of macromolecules. CA also has nucleocapsid-like chaperone activity, promoting primer tRNA(i)-Met annealing to the multipartite primer-binding site (PBS), dimerization of Ty1 RNA and initiation of reverse transcription. Functionally, the aspartyl protease (PR) mediates the proteolytic cleavages of the Gag and Gag-Pol polyproteins after assembly of the VLP. In terms of biological role, reverse transcriptase/ribonuclease H (RT) is a multifunctional enzyme that catalyzes the conversion of the retro-elements RNA genome into dsDNA within the VLP. The enzyme displays a DNA polymerase activity that can copy either DNA or RNA templates, and a ribonuclease H (RNase H) activity that cleaves the RNA strand of RNA-DNA heteroduplexes during plus-strand synthesis and hydrolyzes RNA primers. The conversion leads to a linear dsDNA copy of the retrotransposon that includes long terminal repeats (LTRs) at both ends. Integrase (IN) targets the VLP to the nucleus, where a subparticle preintegration complex (PIC) containing at least integrase and the newly synthesized dsDNA copy of the retrotransposon must transit the nuclear membrane. Once in the nucleus, integrase performs the integration of the dsDNA into the host genome. The protein is Transposon Ty1-DR4 Gag-Pol polyprotein (TY1B-DR4) of Saccharomyces cerevisiae (strain ATCC 204508 / S288c) (Baker's yeast).